We begin with the raw amino-acid sequence, 282 residues long: Pantothenate synthetase (282 aa).

30 to 37 (MGYLHEGH) serves as a coordination point for ATP. His-37 (proton donor) is an active-site residue. Gln-61 is a (R)-pantoate binding site. Gln-61 provides a ligand contact to beta-alanine. 147–150 (GMKD) is an ATP binding site. (R)-pantoate is bound at residue Gln-153. Residues Val-176 and 184–187 (KSSR) each bind ATP.

This sequence belongs to the pantothenate synthetase family. In terms of assembly, homodimer.

Its subcellular location is the cytoplasm. It carries out the reaction (R)-pantoate + beta-alanine + ATP = (R)-pantothenate + AMP + diphosphate + H(+). Its pathway is cofactor biosynthesis; (R)-pantothenate biosynthesis; (R)-pantothenate from (R)-pantoate and beta-alanine: step 1/1. In terms of biological role, catalyzes the condensation of pantoate with beta-alanine in an ATP-dependent reaction via a pantoyl-adenylate intermediate. This chain is Pantothenate synthetase, found in Bacillus anthracis (strain A0248).